The following is a 260-amino-acid chain: 4-hydroxy-tetrahydrodipicolinate reductase (260 aa).

NAD(+) is bound by residues 8 to 13, Glu35, 91 to 93, and 115 to 118; these read GAAGRM, GTT, and APNM. His148 (proton donor/acceptor) is an active-site residue. His149 lines the (S)-2,3,4,5-tetrahydrodipicolinate pocket. Lys152 acts as the Proton donor in catalysis. 158-159 provides a ligand contact to (S)-2,3,4,5-tetrahydrodipicolinate; sequence GT.

The protein belongs to the DapB family.

The protein localises to the cytoplasm. The catalysed reaction is (S)-2,3,4,5-tetrahydrodipicolinate + NAD(+) + H2O = (2S,4S)-4-hydroxy-2,3,4,5-tetrahydrodipicolinate + NADH + H(+). It catalyses the reaction (S)-2,3,4,5-tetrahydrodipicolinate + NADP(+) + H2O = (2S,4S)-4-hydroxy-2,3,4,5-tetrahydrodipicolinate + NADPH + H(+). Its pathway is amino-acid biosynthesis; L-lysine biosynthesis via DAP pathway; (S)-tetrahydrodipicolinate from L-aspartate: step 4/4. Functionally, catalyzes the conversion of 4-hydroxy-tetrahydrodipicolinate (HTPA) to tetrahydrodipicolinate. The chain is 4-hydroxy-tetrahydrodipicolinate reductase from Rubrobacter xylanophilus (strain DSM 9941 / JCM 11954 / NBRC 16129 / PRD-1).